We begin with the raw amino-acid sequence, 219 residues long: RNA chaperone ProQ (219 aa).

Positions 102 to 160 are disordered; the sequence is TLKESQDKAKAKRAERSKDEGDAADKAPRKPKRKPQPQARRDAKPAAKDKPKAAPKAPA. Composition is skewed to basic and acidic residues over residues 105-129 and 140-153; these read ESQDKAKAKRAERSKDEGDAADKAP and ARRDAKPAAKDKPK.

This sequence belongs to the ProQ family.

Its subcellular location is the cytoplasm. Functionally, RNA chaperone with significant RNA binding, RNA strand exchange and RNA duplexing activities. The polypeptide is RNA chaperone ProQ (Shewanella amazonensis (strain ATCC BAA-1098 / SB2B)).